Reading from the N-terminus, the 465-residue chain is MSEALTPRQIVEKLDQFIVGQKEAKKAVAIALRNRYRRSLLDEKLRDEVVPKNILMIGPTGVGKTEIARRLAKLVGAPFVKVEATKFTEVGYVGRDVESMVRDLVETSVRLVKERKMNEVKDRAEQQANKRLVELLVPGKQKQTMKNPLELLFGGAQTSQQDTYQTYEDDHIEQKRRQVAWQLANGQLEDEMVTIEVEEQQPMFFDFLQGAGIEQMGMNMQDALSSLIPKRRKKRKLKVREARKVLTNEEAQKLIDMDEVTQEAIRLAEQSGIIFIDEIDKIARSGQAASSADVSREGVQRDILPIVEGSTVMTKYGPVKTDHILFIAAGAFHMAKPSDLIPELQGRFPIRVELTKLSVDDFVKILVEPDNALIKQYKALLATEGINLEFSDDAIRKIAEVAFEVNQTTDNIGARRLHTIMEKLLEDLLFEAPDITLDEVVITPQYVEQKLGNIVKNKDLSEFIL.

Residues Val19, 61 to 66 (GVGKTE), Asp277, Glu343, and Arg415 contribute to the ATP site.

The protein belongs to the ClpX chaperone family. HslU subfamily. A double ring-shaped homohexamer of HslV is capped on each side by a ring-shaped HslU homohexamer. The assembly of the HslU/HslV complex is dependent on binding of ATP.

The protein localises to the cytoplasm. Functionally, ATPase subunit of a proteasome-like degradation complex; this subunit has chaperone activity. The binding of ATP and its subsequent hydrolysis by HslU are essential for unfolding of protein substrates subsequently hydrolyzed by HslV. HslU recognizes the N-terminal part of its protein substrates and unfolds these before they are guided to HslV for hydrolysis. This chain is ATP-dependent protease ATPase subunit HslU, found in Geobacillus sp. (strain WCH70).